The following is a 704-amino-acid chain: Ribosomal RNA large subunit methyltransferase K/L (704 aa).

Belongs to the methyltransferase superfamily. RlmKL family.

The protein resides in the cytoplasm. The enzyme catalyses guanosine(2445) in 23S rRNA + S-adenosyl-L-methionine = N(2)-methylguanosine(2445) in 23S rRNA + S-adenosyl-L-homocysteine + H(+). The catalysed reaction is guanosine(2069) in 23S rRNA + S-adenosyl-L-methionine = N(2)-methylguanosine(2069) in 23S rRNA + S-adenosyl-L-homocysteine + H(+). Functionally, specifically methylates the guanine in position 2445 (m2G2445) and the guanine in position 2069 (m7G2069) of 23S rRNA. The sequence is that of Ribosomal RNA large subunit methyltransferase K/L from Alcanivorax borkumensis (strain ATCC 700651 / DSM 11573 / NCIMB 13689 / SK2).